The sequence spans 819 residues: Probable beta-glucosidase G (819 aa).

An N-terminal signal peptide occupies residues 1–20; the sequence is MTSASQILVWGLLAASGAQA. N-linked (GlcNAc...) asparagine glycosylation is found at Asn41, Asn59, Asn107, Asn228, and Asn277. Residue Asp305 is part of the active site. Residues Asn337, Asn344, Asn351, Asn403, Asn500, Asn509, Asn554, Asn567, Asn588, Asn627, Asn683, and Asn719 are each glycosylated (N-linked (GlcNAc...) asparagine).

The protein belongs to the glycosyl hydrolase 3 family.

The protein localises to the secreted. The catalysed reaction is Hydrolysis of terminal, non-reducing beta-D-glucosyl residues with release of beta-D-glucose.. It participates in glycan metabolism; cellulose degradation. Beta-glucosidases are one of a number of cellulolytic enzymes involved in the degradation of cellulosic biomass. Catalyzes the last step releasing glucose from the inhibitory cellobiose. This chain is Probable beta-glucosidase G (bglG), found in Emericella nidulans (strain FGSC A4 / ATCC 38163 / CBS 112.46 / NRRL 194 / M139) (Aspergillus nidulans).